We begin with the raw amino-acid sequence, 462 residues long: Argininosuccinate lyase (462 aa).

Belongs to the lyase 1 family. Argininosuccinate lyase subfamily.

Its subcellular location is the cytoplasm. It catalyses the reaction 2-(N(omega)-L-arginino)succinate = fumarate + L-arginine. It functions in the pathway amino-acid biosynthesis; L-arginine biosynthesis; L-arginine from L-ornithine and carbamoyl phosphate: step 3/3. This chain is Argininosuccinate lyase, found in Streptococcus agalactiae serotype Ia (strain ATCC 27591 / A909 / CDC SS700).